We begin with the raw amino-acid sequence, 61 residues long: Tryptophyllin-T1 (61 aa).

A signal peptide spans 1–22 (MDFLKKSLFLVLFLGLVSISLC). Positions 23 to 53 (DEEKRQDDDEASEREEKKEIHEEGNQEERRD) are excised as a propeptide. Residues 25 to 61 (EKRQDDDEASEREEKKEIHEEGNQEERRDRPPSWIPK) form a disordered region. A compositionally biased stretch (basic and acidic residues) spans 36 to 55 (REEKKEIHEEGNQEERRDRP). Proline 56 carries the 4-hydroxyproline; partial modification.

It belongs to the frog skin active peptide (FSAP) family. Tryptophillin subfamily. In terms of tissue distribution, expressed by the skin glands.

The protein resides in the secreted. The polypeptide is Tryptophyllin-T1 (Pithecopus azureus (Orange-legged monkey tree frog)).